A 512-amino-acid polypeptide reads, in one-letter code: 2-isopropylmalate synthase (512 aa).

The Pyruvate carboxyltransferase domain occupies 5 to 268; it reads LIIFDTTLRD…DVGIDTQHIV (264 aa). Mn(2+)-binding residues include Asp14, His202, His204, and Asn239. Residues 394-512 form a regulatory domain region; that stretch reads GFVSLAQHSE…SKAERVAAQG (119 aa).

It belongs to the alpha-IPM synthase/homocitrate synthase family. LeuA type 1 subfamily. In terms of assembly, homodimer. Requires Mn(2+) as cofactor.

It localises to the cytoplasm. It carries out the reaction 3-methyl-2-oxobutanoate + acetyl-CoA + H2O = (2S)-2-isopropylmalate + CoA + H(+). It functions in the pathway amino-acid biosynthesis; L-leucine biosynthesis; L-leucine from 3-methyl-2-oxobutanoate: step 1/4. Catalyzes the condensation of the acetyl group of acetyl-CoA with 3-methyl-2-oxobutanoate (2-ketoisovalerate) to form 3-carboxy-3-hydroxy-4-methylpentanoate (2-isopropylmalate). This chain is 2-isopropylmalate synthase, found in Acidovorax ebreus (strain TPSY) (Diaphorobacter sp. (strain TPSY)).